The primary structure comprises 127 residues: Aspartate 1-decarboxylase (127 aa).

Residue S25 is the Schiff-base intermediate with substrate; via pyruvic acid of the active site. S25 is modified (pyruvic acid (Ser)). T57 serves as a coordination point for substrate. Y58 functions as the Proton donor in the catalytic mechanism. 73-75 is a substrate binding site; that stretch reads GAA.

It belongs to the PanD family. As to quaternary structure, heterooctamer of four alpha and four beta subunits. It depends on pyruvate as a cofactor. In terms of processing, is synthesized initially as an inactive proenzyme, which is activated by self-cleavage at a specific serine bond to produce a beta-subunit with a hydroxyl group at its C-terminus and an alpha-subunit with a pyruvoyl group at its N-terminus.

It localises to the cytoplasm. The enzyme catalyses L-aspartate + H(+) = beta-alanine + CO2. It functions in the pathway cofactor biosynthesis; (R)-pantothenate biosynthesis; beta-alanine from L-aspartate: step 1/1. Catalyzes the pyruvoyl-dependent decarboxylation of aspartate to produce beta-alanine. This Clostridium botulinum (strain Loch Maree / Type A3) protein is Aspartate 1-decarboxylase.